We begin with the raw amino-acid sequence, 257 residues long: Small ribosomal subunit protein uS4c (257 aa).

S4 RNA-binding domains are found at residues 110-170 and 189-255; these read MRLD…QLVN and KTLP…KNYL.

Belongs to the universal ribosomal protein uS4 family. Part of the 30S ribosomal subunit. Contacts protein S5. The interaction surface between S4 and S5 is involved in control of translational fidelity.

It localises to the plastid. Its subcellular location is the chloroplast. Its function is as follows. One of the primary rRNA binding proteins, it binds directly to 16S rRNA where it nucleates assembly of the body of the 30S subunit. In terms of biological role, with S5 and S12 plays an important role in translational accuracy. The polypeptide is Small ribosomal subunit protein uS4c (rps4) (Chlamydomonas reinhardtii (Chlamydomonas smithii)).